We begin with the raw amino-acid sequence, 448 residues long: Allantoinase (448 aa).

Zn(2+)-binding residues include H60, H62, K147, H183, H239, and D312. N6-carboxylysine is present on K147.

It belongs to the metallo-dependent hydrolases superfamily. Allantoinase family. Homotetramer. It depends on Zn(2+) as a cofactor. In terms of processing, carboxylation allows a single lysine to coordinate two zinc ions.

The enzyme catalyses (S)-allantoin + H2O = allantoate + H(+). It functions in the pathway nitrogen metabolism; (S)-allantoin degradation; allantoate from (S)-allantoin: step 1/1. Its function is as follows. Catalyzes the conversion of allantoin (5-ureidohydantoin) to allantoic acid by hydrolytic cleavage of the five-member hydantoin ring. This chain is Allantoinase, found in Deinococcus radiodurans (strain ATCC 13939 / DSM 20539 / JCM 16871 / CCUG 27074 / LMG 4051 / NBRC 15346 / NCIMB 9279 / VKM B-1422 / R1).